The following is a 431-amino-acid chain: F-box/kelch-repeat protein At4g19930 (431 aa).

One can recognise an F-box domain in the interval 37-83 (HEPMPYIPFDLVIEILTRLPAKSLMRFKSVSKLWSSLICSRTFTNRL). 2 Kelch repeats span residues 143–189 (LSHV…KNKK) and 227–275 (WVFI…PMLV).

This chain is F-box/kelch-repeat protein At4g19930, found in Arabidopsis thaliana (Mouse-ear cress).